A 240-amino-acid chain; its full sequence is MGRAFEYRRAAKEKRWDKMSKVFPKLAKAITLAAKDGGSEPDTNAKLRTAILNAKAQNMPKDNIDAAIKRASSKEGNLSEITYEGKANFGVLIIMECMTDNPTRTIANLKSYFNKTQGASIVPNGSLEFMFNRKSVFECLKSEVENLKLSLEDLEFALIDYGLEELEEVGDKVIIRGDYNSFKLLNEGFESLKLPILKASLQRIATTPIELNDEQMELTEKLLDRIEDDDDVVALYTNIE.

It belongs to the TACO1 family.

It is found in the cytoplasm. The protein is Probable transcriptional regulatory protein HPG27_148 of Helicobacter pylori (strain G27).